A 213-amino-acid chain; its full sequence is Probable germin-like protein subfamily 2 member 5 (213 aa).

The N-terminal stretch at 1–22 is a signal peptide; sequence MASFATHLVVVVTMLFVAMASA. Cysteines 29 and 44 form a disulfide. In terms of domain architecture, Cupin type-1 spans 58–203; sequence KGLANIAATN…SFQLKHKQVK (146 aa). The N-linked (GlcNAc...) asparagine glycan is linked to Asn67. Mn(2+) is bound by residues His106, His108, Glu113, and His152.

It belongs to the germin family. In terms of assembly, oligomer (believed to be a pentamer but probably hexamer).

The protein resides in the secreted. The protein localises to the extracellular space. Its subcellular location is the apoplast. Functionally, may play a role in plant defense. Probably has no oxalate oxidase activity even if the active site is conserved. In Arabidopsis thaliana (Mouse-ear cress), this protein is Probable germin-like protein subfamily 2 member 5.